The following is a 249-amino-acid chain: MEQFKDLQKSLYIWTDSGELDKRVQTIKEATGGEVAVENVHRLSFSSYANSSFDLIVIECAQLTDNYVKLLHMLKPSGKLHLIAYIGTPASLLQEIKLSGFINCGEDTAANTLTAEKPGYETGSAARLSFAKKAAGVNVWKISGDDEELIDEEDLLDEADKQKPDPSGLRVCSTTGKRKACKNCSCGLAEELESERTTSSANTENAKSSCGNCYLGDAFRCSTCPYLGMPAFKPGEKVQLANNLLKSDI.

The segment at 1 to 130 (MEQFKDLQKS…ETGSAARLSF (130 aa)) is N-terminal SAM-like domain. The interval 131 to 161 (AKKAAGVNVWKISGDDEELIDEEDLLDEADK) is linker. Residues C172, C181, C184, and C186 each coordinate [2Fe-2S] cluster. The fe-S binding site A stretch occupies residues 172 to 186 (CSTTGKRKACKNCSC). Residues C210, C213, C221, and C224 each coordinate [4Fe-4S] cluster. 2 short sequence motifs (cx2C motif) span residues 210 to 213 (CGNC) and 221 to 224 (CSTC). The tract at residues 210–224 (CGNCYLGDAFRCSTC) is fe-S binding site B.

The protein belongs to the anamorsin family. Monomer. It depends on [2Fe-2S] cluster as a cofactor. Requires [4Fe-4S] cluster as cofactor.

The protein resides in the cytoplasm. Its subcellular location is the mitochondrion intermembrane space. Functionally, component of the cytosolic iron-sulfur (Fe-S) protein assembly (CIA) machinery. Required for the maturation of extramitochondrial Fe-S proteins. Part of an electron transfer chain functioning in an early step of cytosolic Fe-S biogenesis, facilitating the de novo assembly of a [4Fe-4S] cluster on the cytosolic Fe-S scaffold complex. Electrons are transferred from NADPH via a FAD- and FMN-containing diflavin oxidoreductase. Together with the diflavin oxidoreductase, also required for the assembly of the diferric tyrosyl radical cofactor of ribonucleotide reductase (RNR), probably by providing electrons for reduction during radical cofactor maturation in the catalytic small subunit. In Drosophila grimshawi (Hawaiian fruit fly), this protein is Anamorsin homolog.